Here is a 167-residue protein sequence, read N- to C-terminus: HVA22-like protein b (167 aa).

The next 3 helical transmembrane spans lie at Val18–Glu38, Gln47–Arg67, and Leu68–Leu88.

The protein belongs to the DP1 family. As to expression, predominantly expressed in flower buds.

Its subcellular location is the membrane. In Arabidopsis thaliana (Mouse-ear cress), this protein is HVA22-like protein b (HVA22B).